A 183-amino-acid chain; its full sequence is MMVQHLKRRPLSRYLKDFKHSQTHCAHCRKLLDRITLVRDGKIVNKIEISRLDTLLDENGWQTEQKSWAALCRFCGDLHCKTQSDFFDIIGFKQFLFEQTEMSPGTVREYVVRLRRLGNHLHEQNISLDQLQDGFLDEILAPWLPTTSTNNYRIALRKYQHYQRQTCTRLVQKSSSLPSSDIY.

Functionally, during the post-exponential growth phase transiently interferes with RpoS (sigma S) activity without affecting expression of RpoS itself. It is probably not an anti-sigma factor as its overexpression is detrimental in rapidly growing cells where there is almost no sigma S factor. There is a strong overlap between Crl-activated genes and FliZ-down-regulated genes. FliZ acts as a timing device for expression of the genes for the adhesive curli fimbriae by indirectly decreasing expression of the curli regulator CsgD. The protein is Regulator of sigma S factor FliZ (fliZ) of Escherichia coli (strain K12).